A 626-amino-acid chain; its full sequence is MSQNQETRGFQSEVKQLLQLMIHSLYSNKEIFLRELISNASDAADKLRFKALSNPALYEGDGDLRVRVSFDADKGTITISDNGIGMTREQVIDHLGTIAKSGTKEFLTALGQDQAKNSQLIGQFGVGFYSAFIVADKVTVKTRAAGEEADKAVLWESAGEGEYSVADIEKKSRGTDVILHLREDEKEFLNEWRLREIIGKYSDHIGLPVEMLTKEYDDEGKECGEKWEKINKSDALWTRSKNDVSDEEYKAFYKHLSHDFVDPVTWAHNKVEGNQAYTSLLYVPAKAPWDLFNREHKHGLKLYVQRVFIMDDAEQFMPNYLRFMRGLIDSNDLPLNVSREILQDNKITAALRKALTKRSLQMLEKLAKDDAEKYLKFWKEFGLVLKEGPAEDFANKETIAKLLRFASTHNDGSEQTVSLEDYILRMKEGQKAIYYITADSYVAAKNSPHLELFNKKGIEVLLLSDRIDEWMLSYLTEFDGKQLQSITKADLDLGDLADKESETQKQQDKAFGSFIERVKNLLGERVKTVRLTHNLTDTPAVVSTDNDQMTTQMAKLFAAAGQPVPEVKYTFELNPEHYLVKKVADIADETEFADWVELLLEQAMLAERGSLENPAAFIKRINKLLG.

The segment at methionine 1 to arginine 339 is a; substrate-binding. The interval glutamate 340–lysine 555 is b. The tract at residues leucine 556–glycine 626 is c.

This sequence belongs to the heat shock protein 90 family. Homodimer.

Its subcellular location is the cytoplasm. Molecular chaperone. Has ATPase activity. This is Chaperone protein HtpG from Haemophilus influenzae (strain 86-028NP).